The chain runs to 215 residues: Floral homeotic protein GLOBOSA (215 aa).

One can recognise an MADS-box domain in the interval 3 to 57 (RGKIEIKRIENSSNRQVTYSKRRNGIMKKAKEISVLCDAHVSVIIFASSGKMHEF). Residues 84 to 170 (HEHLDNEINR…QFKLRQMHLD (87 aa)) form the K-box domain.

It is found in the nucleus. Functionally, transcription factor involved in the genetic control of flower development. Acts in conjunction with DEFICIENS (defA). This is Floral homeotic protein GLOBOSA (GLO) from Antirrhinum majus (Garden snapdragon).